Here is a 146-residue protein sequence, read N- to C-terminus: Large ribosomal subunit protein uL16 (146 aa).

Belongs to the universal ribosomal protein uL16 family. Part of the 50S ribosomal subunit.

Functionally, binds 23S rRNA and is also seen to make contacts with the A and possibly P site tRNAs. In Lactobacillus helveticus (strain DPC 4571), this protein is Large ribosomal subunit protein uL16.